Reading from the N-terminus, the 376-residue chain is Glutamate 5-kinase (376 aa).

Lys-15 contributes to the ATP binding site. 3 residues coordinate substrate: Ser-56, Asp-143, and Asn-155. Position 175–176 (175–176 (SD)) interacts with ATP. Positions 281-358 (KGTLTIDAGA…PDVMSILGVS (78 aa)) constitute a PUA domain.

The protein belongs to the glutamate 5-kinase family.

Its subcellular location is the cytoplasm. It carries out the reaction L-glutamate + ATP = L-glutamyl 5-phosphate + ADP. The protein operates within amino-acid biosynthesis; L-proline biosynthesis; L-glutamate 5-semialdehyde from L-glutamate: step 1/2. Catalyzes the transfer of a phosphate group to glutamate to form L-glutamate 5-phosphate. The sequence is that of Glutamate 5-kinase from Rhodopseudomonas palustris (strain HaA2).